Reading from the N-terminus, the 239-residue chain is Leucine rich adaptor protein 1 (239 aa).

2 LRR repeats span residues 55 to 83 and 93 to 114; these read LGDK…LVTL and LLEE…QYSL. A compositionally biased stretch (low complexity) spans 107 to 118; that stretch reads LTSSQYSLTGGS. Positions 107–140 are disordered; the sequence is LTSSQYSLTGGSPERSRRGSWDSLPDTSSTDRLD. Serine 118, serine 126, and serine 129 each carry phosphoserine.

Forms a tripartite complex with CDC42BPA/CDC42BPB and MYO18A acting as an adapter connecting both. Its binding to CDC42BPA/CDC42BPB results in their activation by abolition of their negative autoregulation. Interacts with CDC42BPA and CDC42BPB. Post-translationally, phosphorylated.

The protein resides in the cytoplasm. Functionally, acts as an activator of the canonical NF-kappa-B pathway and drive the production of pro-inflammatory cytokines. Promotes the antigen (Ag)-presenting and priming function of dendritic cells via the canonical NF-kappa-B pathway. In concert with MYO18A and CDC42BPA/CDC42BPB, is involved in modulating lamellar actomyosin retrograde flow that is crucial to cell protrusion and migration. Activates CDC42BPA/CDC42BPB and targets it to actomyosin through its interaction with MYO18A, leading to MYL9/MLC2 phosphorylation and MYH9/MYH10-dependent actomyosin assembly in the lamella. In Rattus norvegicus (Rat), this protein is Leucine rich adaptor protein 1 (Lurap1).